Here is a 498-residue protein sequence, read N- to C-terminus: Tumor necrosis factor receptor superfamily member 8 (498 aa).

Residues Met1–Ala18 form the signal peptide. Residues Phe19 to Gly287 are Extracellular-facing. TNFR-Cys repeat units follow at residues Gln68–Cys105 and Glu106–Cys146. Intrachain disulfides connect Cys69/Cys81, Cys84/Cys97, Cys87/Cys105, Cys107/Cys121, and Cys128/Cys146. A disordered region spans residues Lys142–Ser168. Low complexity predominate over residues Pro149–Pro160. N-linked (GlcNAc...) asparagine glycosylation is found at Asn156, Asn183, and Asn229. The disordered stretch occupies residues Glu204 to Ala256. A compositionally biased stretch (polar residues) spans Asp242–Ala256. A helical membrane pass occupies residues Pro288 to Cys308. Residues Tyr309–Lys498 are Cytoplasmic-facing. Residues Asp338 to Ser358 show a composition bias toward polar residues. Disordered stretches follow at residues Asp338–Pro370, Leu389–Glu411, and Glu436–Lys498. 2 positions are modified to phosphoserine: Ser339 and Ser353. Basic and acidic residues-rich tracts occupy residues Glu402–Glu411, Glu456–Glu465, and Glu484–Lys498.

Belongs to the TNFR8 family. As to quaternary structure, interacts with TRAF1, TRAF2, TRAF3 and TRAF5. Detected in thymus and in activated splenocytes.

It localises to the cell membrane. In terms of biological role, receptor for TNFSF8/CD30L. May play a role in the regulation of cellular growth and transformation of activated lymphoblasts. Regulates gene expression through activation of NF-kappa-B. The sequence is that of Tumor necrosis factor receptor superfamily member 8 from Mus musculus (Mouse).